Consider the following 389-residue polypeptide: Large envelope protein (389 aa).

An N-acetylmethionine modification is found at Met1. Gly2 carries the N-myristoyl glycine; by host lipid modification. Positions 2–108 (GQNLSTSNPL…PPLRNTHPQA (107 aa)) are pre-S1. Residues 2–163 (GQNLSTSNPL…FSRIGDPALN (162 aa)) are pre-S. Residues 2 to 170 (GQNLSTSNPL…ALNMENITSG (169 aa)) lie on the Virion surface; in external conformation side of the membrane. Residues 2–242 (GQNLSTSNPL…PGYRWMCLRR (241 aa)) are Intravirion; in internal conformation-facing. A glycan (O-linked (GalNAc...) threonine) is linked at Asn37. The segment at 76 to 103 (TLPANPPPASTNRQSGRQPTPLSPPLRN) is disordered. Residues 85 to 95 (STNRQSGRQPT) are compositionally biased toward polar residues. The segment at 109–163 (MQWNSTTFHQTLQDPRVRGLYFPAGGSSSGTVNPVLTTASPLSSIFSRIGDPALN) is pre-S2. Residues 171-191 (FLGPLLVLQAGFFLLTRILTI) traverse the membrane as a helical segment. Topologically, residues 192–242 (PQSLDSWWTSLNFLGGTTVCLGQNSQSPTSNHSPTSCPPTCPGYRWMCLRR) are intravirion; in external conformation. Residues 243-263 (FIIFLFILLLCLIFLLVLLDY) form a helical membrane-spanning segment. The Virion surface portion of the chain corresponds to 264–337 (QGMLPVCPLI…WASARFSWLS (74 aa)). An N-linked (GlcNAc...) asparagine; by host glycan is attached at Asn309. The chain crosses the membrane as a helical span at residues 338-358 (LLVPFVQWFVGLSPTVWLSVI). Residues 359 to 364 (WMMWYW) lie on the Intravirion side of the membrane. A helical transmembrane segment spans residues 365 to 387 (GPSLYSILSPFLPLLPIFFCLWV). Residues 388–389 (YI) lie on the Virion surface side of the membrane.

The protein belongs to the orthohepadnavirus major surface antigen family. In terms of assembly, in its internal form (Li-HBsAg), interacts with the capsid protein and with the isoform S. Interacts with host chaperone CANX. Associates with host chaperone CANX through its pre-S2 N glycan; this association may be essential for isoform M proper secretion. As to quaternary structure, interacts with isoform L. Interacts with the antigens of satellite virus HDV (HDVAgs); this interaction is required for encapsidation of HDV genomic RNA. Isoform M is N-terminally acetylated by host at a ratio of 90%, and N-glycosylated by host at the pre-S2 region. In terms of processing, myristoylated.

Its subcellular location is the virion membrane. Functionally, the large envelope protein exists in two topological conformations, one which is termed 'external' or Le-HBsAg and the other 'internal' or Li-HBsAg. In its external conformation the protein attaches the virus to cell receptors and thereby initiating infection. This interaction determines the species specificity and liver tropism. This attachment induces virion internalization predominantly through caveolin-mediated endocytosis. The large envelope protein also assures fusion between virion membrane and endosomal membrane. In its internal conformation the protein plays a role in virion morphogenesis and mediates the contact with the nucleocapsid like a matrix protein. The middle envelope protein plays an important role in the budding of the virion. It is involved in the induction of budding in a nucleocapsid independent way. In this process the majority of envelope proteins bud to form subviral lipoprotein particles of 22 nm of diameter that do not contain a nucleocapsid. This chain is Large envelope protein, found in Homo sapiens (Human).